Consider the following 306-residue polypeptide: MVKLVSLHISRSFIQSPLSRNQEWIDLTLDYAISTVTVAGKMSNTHWALRPFKGHFLPETADMSRQFTRARELLRPTLEARLQQRDKVPNDLMQWIINNYPDQEDDLTLHTRLQLEAVQAATYNLAIMQRPLDSSRVVELAEMRQLLEGVAKIEPDRDCERESLCTVTIPTPRWKHSAGWCLRLGTIYDDDSLWTDPTSFDGYRFEKLRTIKGNELKFQYASTSTSELNWGYGTHACPGRHYASNQIKLMIVSLLSRYEFQFDHEQTDKKAIVERPPNVVDGVRIMPNPQTLVMVRSLGNVNEGCE.

Cys-237 is a binding site for heme.

Belongs to the cytochrome P450 family. It depends on heme as a cofactor.

It participates in mycotoxin biosynthesis. Functionally, cytochrome P450 monooxygenase; part of the gene cluster that mediates the biosynthesis of aspirochlorine (or antibiotic A30641), an unusual halogenated spiro compound with distinctive antifungal properties due to selective inhibition of protein biosynthesis, and which is also active against bacteria, viruses, and murine tumor cells. The non-ribosomal peptide synthetase (NRPS) aclP is responsible the formation of the diketopiperazine (DKP) core from the condensation of 2 phenylalanine residues. One Phe residue is tailored into chlorotyrosine by hydroxylation and chlorination, whereas the second Phe undergoes an unprecedented C-C bond cleavage to be converted into glycine. After formation of the DKP, sulfur is incorporated into the DKP by conjugation with glutathione by aclG, followed by its stepwise degradation to the thiol by aclI, aclJ and aclK, and the dithiol oxidation by aclT. In addition, oxygenases (aclB, aclC, aclL and aclO) and O-methyltransferases (aclM and aclU) act as tailoring enzymes to produce the intermediate dechloroaspirochlorine. Ultimately, chlorination of dechloroaspirochlorine by the halogenase aclH is the last step in the aspirochlorine pathway. In Aspergillus oryzae (strain ATCC 42149 / RIB 40) (Yellow koji mold), this protein is Cytochrome P450 monooxygenase aclO.